A 164-amino-acid polypeptide reads, in one-letter code: SsrA-binding protein (164 aa).

Belongs to the SmpB family.

It localises to the cytoplasm. Required for rescue of stalled ribosomes mediated by trans-translation. Binds to transfer-messenger RNA (tmRNA), required for stable association of tmRNA with ribosomes. tmRNA and SmpB together mimic tRNA shape, replacing the anticodon stem-loop with SmpB. tmRNA is encoded by the ssrA gene; the 2 termini fold to resemble tRNA(Ala) and it encodes a 'tag peptide', a short internal open reading frame. During trans-translation Ala-aminoacylated tmRNA acts like a tRNA, entering the A-site of stalled ribosomes, displacing the stalled mRNA. The ribosome then switches to translate the ORF on the tmRNA; the nascent peptide is terminated with the 'tag peptide' encoded by the tmRNA and targeted for degradation. The ribosome is freed to recommence translation, which seems to be the essential function of trans-translation. This is SsrA-binding protein from Corynebacterium efficiens (strain DSM 44549 / YS-314 / AJ 12310 / JCM 11189 / NBRC 100395).